A 583-amino-acid polypeptide reads, in one-letter code: Lipoprotein LpqB (583 aa).

Positions 1-29 (MSNKTTEATKTTKVKKVLSVVAGLGLLAG) are cleaved as a signal peptide. Cys30 carries the N-palmitoyl cysteine lipid modification. Residue Cys30 is the site of S-diacylglycerol cysteine attachment. Residues 38–63 (NPEAISSYAPAPSGQEAPTPTDGQPS) are disordered.

The protein belongs to the LpqB lipoprotein family.

The protein localises to the cell membrane. In Corynebacterium jeikeium (strain K411), this protein is Lipoprotein LpqB.